Here is a 97-residue protein sequence, read N- to C-terminus: Protein 9b (97 aa).

The 90-residue stretch at 8-97 (VLPALHLVDP…PDEFVVVTAK (90 aa)) folds into the 9b domain.

It belongs to the coronavirus group 2 protein 9b family. Homodimer.

Its subcellular location is the host cytoplasmic vesicle membrane. It localises to the host cytoplasm. This is Protein 9b from Rhinolophus ferrumequinum (Greater horseshoe bat).